Reading from the N-terminus, the 208-residue chain is MSLFITFEGGEGCGKSTQSKALYRYLKKLGLGCVLTHEPGGSKSGDKITRLLKWSKEEHISPLTELLLFNASRSILIDNVIKPALQDGKIVICDRYTDSTLAYQGYGRGLDLDTVKCVNSLASGGLVPDLTIWLDMDDKAALLRKGELPPDRFESENNGFHQRVRNGFGAIYATEPDRFLKLDASLPQSEIFSRIKQRVTILLGCRNE.

Position 9-16 (9-16 (GGEGCGKS)) interacts with ATP.

This sequence belongs to the thymidylate kinase family.

The catalysed reaction is dTMP + ATP = dTDP + ADP. In terms of biological role, phosphorylation of dTMP to form dTDP in both de novo and salvage pathways of dTTP synthesis. The sequence is that of Thymidylate kinase from Dehalococcoides mccartyi (strain CBDB1).